The following is a 479-amino-acid chain: Ammonium transporter Rh type C (479 aa).

Over 1-9 (MAWNTNLRW) the chain is Cytoplasmic. Residues 10-30 (RLPLTCLLLQVVMVILFGVFV) form a helical membrane-spanning segment. Residues 31-60 (RYDFEADAHWWSERTHKNLSDVENEFYYRY) are Extracellular-facing. Asn48 carries an N-linked (GlcNAc...) asparagine glycan. The helical transmembrane segment at 61-81 (PSFQDVHVMVFVGFGFLMTFL) threads the bilayer. Topologically, residues 82–85 (QRYG) are cytoplasmic. Residues 86-106 (FSAVGFNFLLAAFGIQWALLM) traverse the membrane as a helical segment. At 107–123 (QGWFHFLQGRYIVVGVE) the chain is on the extracellular side. The helical transmembrane segment at 124 to 144 (NLINADFCVASVCVAFGAVLG) threads the bilayer. The Cytoplasmic portion of the chain corresponds to 145 to 148 (KVSP). Residues 149-169 (IQLLIMTFFQVTLFAVNEFIL) form a helical membrane-spanning segment. The Extracellular portion of the chain corresponds to 170 to 177 (LNLLKVKD). The helical transmembrane segment at 178-200 (AGGSMTIHTFGAYFGLTVTRILY) threads the bilayer. Topologically, residues 201–218 (RRNLEQSKERQNSVYQSD) are cytoplasmic. Residues 219-239 (LFAMIGTLFLWMYWPSFNSAI) traverse the membrane as a helical segment. The Extracellular segment spans residues 240-250 (SYHGDSQHRAA). Residues 251 to 271 (INTYCSLAACVLTSVAISSAL) form a helical membrane-spanning segment. Topologically, residues 272-281 (HKKGKLDMVH) are cytoplasmic. Residues 282 to 302 (IQNATLAGGVAVGTAAEMMLM) form a helical membrane-spanning segment. Pro303 is a topological domain (extracellular). The helical transmembrane segment at 304 to 324 (YGALIIGFVCGIISTLGFVYL) threads the bilayer. Over 325 to 345 (TPFLESRLHIQDTCGINNLHG) the chain is Cytoplasmic. Residues 346 to 366 (IPGIIGGIVGAVTAASASLEV) traverse the membrane as a helical segment. Residues 367-394 (YGKEGLVHSFDFQGFKGDWTARTQGKFQ) are Extracellular-facing. Residues 395–415 (IYGLLVTLAMALMGGIIVGLI) traverse the membrane as a helical segment. Over 416-479 (LRLPFWGQPS…PMASSVPLVP (64 aa)) the chain is Cytoplasmic.

The protein belongs to the ammonium transporter (TC 2.A.49) family. Rh subfamily. Homotrimer. In terms of processing, N-glycosylated.

It is found in the cell membrane. It localises to the apical cell membrane. The enzyme catalyses NH4(+)(in) = NH4(+)(out). The catalysed reaction is methylamine(out) = methylamine(in). It catalyses the reaction CO2(out) = CO2(in). Functionally, ammonium transporter involved in the maintenance of acid-base homeostasis. Transports ammonium and its related derivative methylammonium across the plasma membrane of epithelial cells likely contributing to renal transepithelial ammonia transport and ammonia metabolism. Postulated to primarily mediate an electroneutral bidirectional transport of NH3 ammonia species according to a mechanism that implies interaction of an NH4(+) ion with acidic residues of the pore entry followed by dissociation of NH4(+) into NH3 and H(+). As a result NH3 transits through the central pore and is protonated on the extracellular side reforming NH4(+). May act as a CO2 channel providing for renal acid secretion. The sequence is that of Ammonium transporter Rh type C (RHCG) from Pan troglodytes (Chimpanzee).